Here is a 185-residue protein sequence, read N- to C-terminus: Capsid protein (185 aa).

The interval 136–185 (NAPILSTLPETTVVRRRDRGRSPRRRTPSPRRRRSQSPRRRRSQSRESQC) is disordered. Residues 149-178 (VRRRDRGRSPRRRTPSPRRRRSQSPRRRRS) show a composition bias toward basic residues. 3 positions are modified to phosphoserine; by host: Ser-157, Ser-164, and Ser-172. The stretch at 157-163 (SPRRRTP) is one 1; half-length repeat. The 3 X 8 AA repeats of S-P-R-R-R-[PR]-S-Q stretch occupies residues 157–179 (SPRRRTPSPRRRRSQSPRRRRSQ). The Bipartite nuclear localization signal motif lies at 160 to 177 (RRTPSPRRRRSQSPRRRR). 2 repeat units span residues 164–171 (SPRRRRSQ) and 172–179 (SPRRRRSQ). Residues 179–185 (QSRESQC) are RNA binding.

The protein belongs to the orthohepadnavirus core antigen family. Homodimerizes, then multimerizes. Interacts with cytosol exposed regions of viral L glycoprotein present in the reticulum-to-Golgi compartment. Interacts with human FLNB. Phosphorylated form interacts with host importin alpha; this interaction depends on the exposure of the NLS, which itself depends upon genome maturation and/or phosphorylation of the capsid protein. Interacts with host NUP153. Post-translationally, phosphorylated by host SRPK1, SRPK2, and maybe protein kinase C or GAPDH. Phosphorylation is critical for pregenomic RNA packaging. Protein kinase C phosphorylation is stimulated by HBx protein and may play a role in transport of the viral genome to the nucleus at the late step during the viral replication cycle.

The protein resides in the virion. It localises to the host cytoplasm. Functionally, self assembles to form an icosahedral capsid. Most capsids appear to be large particles with an icosahedral symmetry of T=4 and consist of 240 copies of capsid protein, though a fraction forms smaller T=3 particles consisting of 180 capsid proteins. Entering capsids are transported along microtubules to the nucleus. Phosphorylation of the capsid is thought to induce exposure of nuclear localization signal in the C-terminal portion of the capsid protein that allows binding to the nuclear pore complex via the importin (karyopherin-) alpha and beta. Capsids are imported in intact form through the nuclear pore into the nuclear basket, where it probably binds NUP153. Only capsids that contain the mature viral genome can release the viral DNA and capsid protein into the nucleoplasm. Immature capsids get stuck in the basket. Capsids encapsulate the pre-genomic RNA and the P protein. Pre-genomic RNA is reverse-transcribed into DNA while the capsid is still in the cytoplasm. The capsid can then either be directed to the nucleus, providing more genomes for transcription, or bud through the endoplasmic reticulum to provide new virions. The chain is Capsid protein from Homo sapiens (Human).